A 245-amino-acid chain; its full sequence is tRNA (guanine-N(1)-)-methyltransferase (245 aa).

Residues G114 and 134–139 each bind S-adenosyl-L-methionine; that span reads IGDYIL.

This sequence belongs to the RNA methyltransferase TrmD family. In terms of assembly, homodimer.

Its subcellular location is the cytoplasm. It catalyses the reaction guanosine(37) in tRNA + S-adenosyl-L-methionine = N(1)-methylguanosine(37) in tRNA + S-adenosyl-L-homocysteine + H(+). Its function is as follows. Specifically methylates guanosine-37 in various tRNAs. The chain is tRNA (guanine-N(1)-)-methyltransferase from Listeria monocytogenes serotype 4b (strain CLIP80459).